The primary structure comprises 94 residues: Large ribosomal subunit protein eL43A (94 aa).

Residues 39 to 62 (CPFCGRNTVKRTAAGIWCCNGKGC) form a C4-type zinc finger.

The protein belongs to the eukaryotic ribosomal protein eL43 family. As to quaternary structure, component of the large ribosomal subunit (LSU). Mature yeast ribosomes consist of a small (40S) and a large (60S) subunit. The 40S small subunit contains 1 molecule of ribosomal RNA (18S rRNA) and at least 33 different proteins. The large 60S subunit contains 3 rRNA molecules (25S, 5.8S and 5S rRNA) and at least 46 different proteins.

The protein localises to the cytoplasm. Component of the ribosome, a large ribonucleoprotein complex responsible for the synthesis of proteins in the cell. The small ribosomal subunit (SSU) binds messenger RNAs (mRNAs) and translates the encoded message by selecting cognate aminoacyl-transfer RNA (tRNA) molecules. The large subunit (LSU) contains the ribosomal catalytic site termed the peptidyl transferase center (PTC), which catalyzes the formation of peptide bonds, thereby polymerizing the amino acids delivered by tRNAs into a polypeptide chain. The nascent polypeptides leave the ribosome through a tunnel in the LSU and interact with protein factors that function in enzymatic processing, targeting, and the membrane insertion of nascent chains at the exit of the ribosomal tunnel. This is Large ribosomal subunit protein eL43A (rpl4301) from Schizosaccharomyces pombe (strain 972 / ATCC 24843) (Fission yeast).